The following is a 547-amino-acid chain: GMP synthase [glutamine-hydrolyzing] (547 aa).

The Glutamine amidotransferase type-1 domain maps to K12–D210. C89 acts as the Nucleophile in catalysis. Residues H184 and E186 contribute to the active site. The GMPS ATP-PPase domain maps to W211–R403. Residue S238 to S244 coordinates ATP.

In terms of assembly, homodimer.

The catalysed reaction is XMP + L-glutamine + ATP + H2O = GMP + L-glutamate + AMP + diphosphate + 2 H(+). Its pathway is purine metabolism; GMP biosynthesis; GMP from XMP (L-Gln route): step 1/1. In terms of biological role, catalyzes the synthesis of GMP from XMP. This Burkholderia pseudomallei (strain 1710b) protein is GMP synthase [glutamine-hydrolyzing].